The chain runs to 731 residues: 1,4-alpha-glucan branching enzyme GlgB (731 aa).

Aspartate 408 functions as the Nucleophile in the catalytic mechanism. Glutamate 461 acts as the Proton donor in catalysis.

It belongs to the glycosyl hydrolase 13 family. GlgB subfamily. As to quaternary structure, monomer.

It catalyses the reaction Transfers a segment of a (1-&gt;4)-alpha-D-glucan chain to a primary hydroxy group in a similar glucan chain.. It participates in glycan biosynthesis; glycogen biosynthesis. Its function is as follows. Catalyzes the formation of the alpha-1,6-glucosidic linkages in glycogen by scission of a 1,4-alpha-linked oligosaccharide from growing alpha-1,4-glucan chains and the subsequent attachment of the oligosaccharide to the alpha-1,6 position. In Corynebacterium efficiens (strain DSM 44549 / YS-314 / AJ 12310 / JCM 11189 / NBRC 100395), this protein is 1,4-alpha-glucan branching enzyme GlgB.